The primary structure comprises 234 residues: MTYKRVLLKLSGEALMGEKPYGIDPAIVQSIAEDVSKVVENNVQLAIVVGGGNIFRGLKGSADGMDRATADYVGMLATVMNAISLQDGLERVGVATRVQTAIEMQEIAEPYIRRRAMRHLEKGRVVVFGGGCGNPFFTTDTTAALRAAEINAEVVMKATKVDGVYDRDPNQFKEAKKYSSLSYQQVLSDEIAVMDSTAIALCKDNNIPIMVFDIFKKGNISRAVAGEPIGSLIS.

Position 9–12 (9–12 (KLSG)) interacts with ATP. Position 51 (glycine 51) interacts with UMP. ATP-binding residues include glycine 52 and arginine 56. UMP is bound by residues aspartate 71 and 132-139 (CGNPFFTT). ATP is bound by residues threonine 159, tyrosine 165, and aspartate 168.

Belongs to the UMP kinase family. In terms of assembly, homohexamer.

It is found in the cytoplasm. The catalysed reaction is UMP + ATP = UDP + ADP. It participates in pyrimidine metabolism; CTP biosynthesis via de novo pathway; UDP from UMP (UMPK route): step 1/1. Its activity is regulated as follows. Inhibited by UTP. Its function is as follows. Catalyzes the reversible phosphorylation of UMP to UDP. This is Uridylate kinase from Prochlorococcus marinus (strain AS9601).